The chain runs to 50 residues: Ornatin-E (50 aa).

The Cell attachment site motif lies at 42 to 44 (RGD).

This sequence belongs to the ornatin family.

It localises to the secreted. Its function is as follows. Potent inhibitor of fibrinogen interaction with platelet receptors expressed on glycoprotein IIb-IIIa complex. May prevent blood from clotting during either feeding and/or storage of ingested blood. The chain is Ornatin-E from Placobdella ornata (Turtle leech).